Reading from the N-terminus, the 302-residue chain is Myeloid-associated differentiation marker-like protein 2 (302 aa).

MARVEL domains lie at 13-149 (AIWS…AKPG) and 154-298 (YMAT…RLRI). Helical transmembrane passes span 45–65 (AYGTFCVFVWAFCFALTILIV), 87–107 (AYAMLATLMTLTAAVIYPMYF), 124–144 (LAVSVCAALLFVTYAVEVFLT), 158–178 (ASGLLKVVQAFVACVIFGALA), 191–211 (WCVAVYSFCFGVTMVVVILNI), 225–245 (FVVIYTVLAILMYISAAVIWP), and 273–293 (LAVTIFTHINLILYIADLIYT).

Belongs to the MAL family.

Its subcellular location is the membrane. This chain is Myeloid-associated differentiation marker-like protein 2 (myadml2), found in Xenopus laevis (African clawed frog).